A 382-amino-acid polypeptide reads, in one-letter code: S-adenosylmethionine synthase (382 aa).

H16 provides a ligand contact to ATP. Residue D18 coordinates Mg(2+). A K(+)-binding site is contributed by E44. The L-methionine site is built by E57 and Q100. Residues Q100–N110 are flexible loop. ATP-binding positions include D165 to K167, R231 to F232, D240, R246 to K247, and K267. D240 is an L-methionine binding site. K271 contacts L-methionine.

It belongs to the AdoMet synthase family. As to quaternary structure, homotetramer; dimer of dimers. It depends on Mg(2+) as a cofactor. The cofactor is K(+).

It localises to the cytoplasm. The enzyme catalyses L-methionine + ATP + H2O = S-adenosyl-L-methionine + phosphate + diphosphate. It participates in amino-acid biosynthesis; S-adenosyl-L-methionine biosynthesis; S-adenosyl-L-methionine from L-methionine: step 1/1. Its function is as follows. Catalyzes the formation of S-adenosylmethionine (AdoMet) from methionine and ATP. The overall synthetic reaction is composed of two sequential steps, AdoMet formation and the subsequent tripolyphosphate hydrolysis which occurs prior to release of AdoMet from the enzyme. The protein is S-adenosylmethionine synthase of Legionella pneumophila (strain Paris).